Here is a 112-residue protein sequence, read N- to C-terminus: Large ribosomal subunit protein eL30 (112 aa).

This sequence belongs to the eukaryotic ribosomal protein eL30 family.

The polypeptide is Large ribosomal subunit protein eL30 (rpl30) (Dictyostelium discoideum (Social amoeba)).